The primary structure comprises 1250 residues: Protein suppressor of variegation 3-7 (1250 aa).

2 disordered regions span residues 107 to 148 (LNNP…HSYH) and 160 to 186 (HDPG…GGMR). Polar residues predominate over residues 132–141 (STKTEPSSDA). The span at 164–175 (DSQDDDDEDDES) shows a compositional bias: acidic residues. 3 positions are modified to phosphoserine: S165, S175, and S176. C2H2-type zinc fingers lie at residues 217–236 (CLYC…IQQH), 319–343 (CRIC…TKGH), 425–446 (CTLC…TRAH), and 487–512 (CSVC…SEKH). The segment covering 343-354 (HMEALRNLDSDK) has biased composition (basic and acidic residues). Residues 343-398 (HMEALRNLDSDKRSRKRKRSKSNSVTNSGGDEAEREKESEPEVGPEDAQDTPVVMM) are disordered. A disordered region spans residues 525 to 564 (VGSADGRGGDNMDEEEAAASDQAQSSQTDDSEDNDDDNWS). Residues 543 to 552 (ASDQAQSSQT) show a composition bias toward low complexity. Residues 553 to 563 (DDSEDNDDDNW) are compositionally biased toward acidic residues. The segment at 605–629 (QICKFCRVRFHNEAAKARHELSARH) adopts a C2H2-type 5 zinc-finger fold. The interval 642 to 684 (KLHQGTNTQTKHNAQDDEESQEQDEEYGEEEEDAEEDSQSNFD) is disordered. The segment covering 657-679 (DDEESQEQDEEYGEEEEDAEEDS) has biased composition (acidic residues). 2 C2H2-type zinc fingers span residues 737–761 (CKLC…TSRH) and 829–852 (CRVC…SRKH). The span at 851–860 (KHVENKERQR) shows a compositional bias: basic and acidic residues. The segment at 851 to 915 (KHVENKERQR…PLAKRSRRSM (65 aa)) is disordered. Residues S871 and S873 each carry the phosphoserine modification. Positions 879-897 (DAERQESGMDKESENDMSV) are enriched in basic and acidic residues. A Phosphoserine modification is found at S975. The BESS domain maps to 987-1026 (RHVMDLFFDSISPTMKSLPPDLAAEGKSKIMQLVCSLELR). The span at 1032-1055 (ATTPTPATVSASSKWPSSTTVTPV) shows a compositional bias: low complexity. Disordered regions lie at residues 1032–1060 (ATTP…TPPA), 1079–1116 (TTPH…NGSA), 1154–1180 (QSRT…ADLS), and 1205–1236 (NTPQ…NGCQ). Composition is skewed to polar residues over residues 1079 to 1091 (TTPH…QNNN) and 1104 to 1114 (GASSAQVTING). Over residues 1206–1224 (TPQMQQPQQAQASITSSTP) the composition is skewed to low complexity.

In terms of assembly, interacts with Su(var)39 through the BESS domain.

The protein localises to the nucleus. Its function is as follows. Dose-limiting factor in position-effect variegation, the inactivation in some cells of a gene translocated next to heterochromatin. It could play a role in chromosome condensation. This chain is Protein suppressor of variegation 3-7 (Su(var)3-7), found in Drosophila melanogaster (Fruit fly).